The primary structure comprises 523 residues: Nuclear receptor ROR-alpha (523 aa).

Low complexity predominate over residues 1–26 (MESAPAAPDPAASEPGSSGADAAAGS). A disordered region spans residues 1-63 (MESAPAAPDP…SRGISVTKKT (63 aa)). At Lys-38 the chain carries N6-methyllysine. The span at 48–57 (QSYSSTSRGI) shows a compositional bias: polar residues. 2 consecutive NR C4-type zinc fingers follow at residues 73 to 93 (CKICGDKSSGIHYGVITCEGC) and 109 to 133 (CPRQKNCLIDRTSRNRCQHCRLQKC). A DNA-binding region (nuclear receptor) is located at residues 73-138 (CKICGDKSSG…RLQKCLAVGM (66 aa)). The segment at 154–183 (DSLYAEVQKHRMQQQQRDHQQQPGEAEPLT) is disordered. The residue at position 183 (Thr-183) is a Phosphothreonine; by MAPK1. Lys-240 participates in a covalent cross-link: Glycyl lysine isopeptide (Lys-Gly) (interchain with G-Cter in SUMO). The 239-residue stretch at 272-510 (ELEHLAQNIS…LHFPPLYKEL (239 aa)) folds into the NR LBD domain. The short motif at 506–523 (LYKELFTSEFEPAMQIDG) is the AF-2 element.

It belongs to the nuclear hormone receptor family. NR1 subfamily. In terms of assembly, monomer. Interacts (via the DNA-binding domain) with HIF1A; the interaction enhances HIF1A transcription under hypoxia through increasing protein stability. Interacts with CEBPB; the interaction disrupts the interaction CEBPB:EP300. Interacts with the coactivators NCOA2, PPARGC1A (via LXXLL motif), EP300 and MED1. Interacts with the corepressor NCOR1. Interacts with MAGED1 and CTNNB1. Interacts with CRY1 and PER2. Interacts (via AF-2 motif) with PROX1. Interacts with NRIP1. Isoform 4 interacts (via AF-2 motif) with isoform 1 of FOXP3 (via LXXLL motif). In terms of processing, phosphorylation by conventional PKCs in neurons inhibits transcriptional activity. Phosphorylated on Thr-183 by MAPK1/ERK1 in vitro. Sumoylated by SENP1 and SENP2. Sumoylation, promoted by PIAS2, PIAS3, PIAS4 but not PIAS1, enhances the transcriptional activity. Desumoylated by SENP1. Post-translationally, ubiquitinated, leading to its degradation by the proteasome. Proteasomal degradation is required for efficient transcriptional activity and is prevented by HR. In terms of processing, monomethylated at Lys-38 by EZH2, this creates a degron recognized by a DCX (DDB1-DCAF1/VPRBP-CUL4A-RBX1) E3 ubiquitin ligase complex. As to expression, widely expressed in a number of tissues. Expressed in both regulatory T-cells (Treg) and effector T-cells (Teff). Isoform 4: Highly expressed in the central nervous system, including in the cerebellum.

It is found in the nucleus. Its function is as follows. Nuclear receptor that binds DNA as a monomer to ROR response elements (RORE) containing a single core motif half-site 5'-AGGTCA-3' preceded by a short A-T-rich sequence. Key regulator of embryonic development, cellular differentiation, immunity, circadian rhythm as well as lipid, steroid, xenobiotics and glucose metabolism. Considered to have intrinsic transcriptional activity, have some natural ligands like oxysterols that act as agonists (25-hydroxycholesterol) or inverse agonists (7-oxygenated sterols), enhancing or repressing the transcriptional activity, respectively. Recruits distinct combinations of cofactors to target genes regulatory regions to modulate their transcriptional expression, depending on the tissue, time and promoter contexts. Regulates genes involved in photoreceptor development including OPN1SW, OPN1SM and ARR3 and skeletal muscle development with MYOD1. Required for proper cerebellum development. Regulates SHH gene expression, among others, to induce granule cells proliferation as well as expression of genes involved in calcium-mediated signal transduction. Regulates the circadian expression of several clock genes, including CLOCK, BMAL1, NPAS2 and CRY1. Competes with NR1D1 for binding to their shared DNA response element on some clock genes such as BMAL1, CRY1 and NR1D1 itself, resulting in NR1D1-mediated repression or RORA-mediated activation of clock genes expression, leading to the circadian pattern of clock genes expression. Therefore influences the period length and stability of the clock. Regulates genes involved in lipid metabolism such as apolipoproteins APOA1, APOA5, APOC3 and PPARG. In liver, has specific and redundant functions with RORC as positive or negative modulator of expression of genes encoding phase I and phase II proteins involved in the metabolism of lipids, steroids and xenobiotics, such as CYP7B1 and SULT2A1. Induces a rhythmic expression of some of these genes. In addition, interplays functionally with NR1H2 and NR1H3 for the regulation of genes involved in cholesterol metabolism. Also involved in the regulation of hepatic glucose metabolism through the modulation of G6PC1 and PCK1. In adipose tissue, plays a role as negative regulator of adipocyte differentiation, probably acting through dual mechanisms. May suppress CEBPB-dependent adipogenesis through direct interaction and PPARG-dependent adipogenesis through competition for DNA-binding. Downstream of IL6 and TGFB and synergistically with RORC isoform 2, is implicated in the lineage specification of uncommitted CD4(+) T-helper (T(H)) cells into T(H)17 cells, antagonizing the T(H)1 program. Probably regulates IL17 and IL17F expression on T(H) by binding to the essential enhancer conserved non-coding sequence 2 (CNS2) in the IL17-IL17F locus. Involved in hypoxia signaling by interacting with and activating the transcriptional activity of HIF1A. May inhibit cell growth in response to cellular stress. May exert an anti-inflammatory role by inducing CHUK expression and inhibiting NF-kappa-B signaling. This chain is Nuclear receptor ROR-alpha (RORA), found in Homo sapiens (Human).